The primary structure comprises 414 residues: CinA-like protein (414 aa).

Belongs to the CinA family.

The sequence is that of CinA-like protein from Akkermansia muciniphila (strain ATCC BAA-835 / DSM 22959 / JCM 33894 / BCRC 81048 / CCUG 64013 / CIP 107961 / Muc).